Consider the following 328-residue polypeptide: Arabinose 5-phosphate isomerase KdsD (328 aa).

Residues 42–184 (CEKMFWCKGK…AVALLKARGF (143 aa)) enclose the SIS domain. Residues 75–76 (GT), histidine 82, histidine 88, 114–123 (ALIPVLKRLH), 148–150 (KVA), threonine 222, and aspartate 275 contribute to the substrate site. Zn(2+) is bound at residue histidine 82. Positions 210–268 (MHTGDEIPHVKKTASLRDALLEVTRKNLGMTVICDDNMMIEGIFTDGDLRRVFDMGVDV) constitute a CBS 1 domain. A CBS 2 domain is found at 277 to 328 (MTPGGIRVRPGILAVEALNLMQSRHITSVMVADGDHLLGVLHMHDLLRAGVV).

It belongs to the SIS family. GutQ/KpsF subfamily. In terms of assembly, homotetramer.

The enzyme catalyses D-arabinose 5-phosphate = D-ribulose 5-phosphate. It functions in the pathway carbohydrate biosynthesis; 3-deoxy-D-manno-octulosonate biosynthesis; 3-deoxy-D-manno-octulosonate from D-ribulose 5-phosphate: step 1/3. The protein operates within bacterial outer membrane biogenesis; lipopolysaccharide biosynthesis. Involved in the biosynthesis of 3-deoxy-D-manno-octulosonate (KDO), a unique 8-carbon sugar component of lipopolysaccharides (LPSs). Catalyzes the reversible aldol-ketol isomerization between D-ribulose 5-phosphate (Ru5P) and D-arabinose 5-phosphate (A5P). This is Arabinose 5-phosphate isomerase KdsD (kdsD) from Escherichia coli O6:H1 (strain CFT073 / ATCC 700928 / UPEC).